We begin with the raw amino-acid sequence, 198 residues long: Probable molybdenum cofactor guanylyltransferase (198 aa).

Residues 9-11 (LAG), Lys22, Asp66, and Asp95 contribute to the GTP site. Position 95 (Asp95) interacts with Mg(2+).

It belongs to the MobA family. It depends on Mg(2+) as a cofactor.

The protein resides in the cytoplasm. It catalyses the reaction Mo-molybdopterin + GTP + H(+) = Mo-molybdopterin guanine dinucleotide + diphosphate. In terms of biological role, transfers a GMP moiety from GTP to Mo-molybdopterin (Mo-MPT) cofactor (Moco or molybdenum cofactor) to form Mo-molybdopterin guanine dinucleotide (Mo-MGD) cofactor. The polypeptide is Probable molybdenum cofactor guanylyltransferase (Clostridium perfringens (strain ATCC 13124 / DSM 756 / JCM 1290 / NCIMB 6125 / NCTC 8237 / Type A)).